The sequence spans 387 residues: Galactokinase (387 aa).

Residue 33–36 coordinates substrate; the sequence is EHID. Residues Ser67 and 124–130 contribute to the ATP site; that span reads GAGLSSS. Positions 130 and 162 each coordinate Mg(2+). Asp174 acts as the Proton acceptor in catalysis. Tyr224 is a substrate binding site.

The protein belongs to the GHMP kinase family. GalK subfamily.

The protein localises to the cytoplasm. It carries out the reaction alpha-D-galactose + ATP = alpha-D-galactose 1-phosphate + ADP + H(+). It participates in carbohydrate metabolism; galactose metabolism. In terms of biological role, catalyzes the transfer of the gamma-phosphate of ATP to D-galactose to form alpha-D-galactose-1-phosphate (Gal-1-P). The chain is Galactokinase from Clostridium perfringens (strain 13 / Type A).